The following is a 690-amino-acid chain: DNA ligase (690 aa).

Residues 49 to 53 (DAEYD), 98 to 99 (SL), and E129 each bind NAD(+). K131 serves as the catalytic N6-AMP-lysine intermediate. The NAD(+) site is built by R152, E191, K308, and K332. Residues C426, C429, C444, and C450 each coordinate Zn(2+). Residues 607–690 (EDAARLEGLT…ALLREQGIDA (84 aa)) enclose the BRCT domain.

The protein belongs to the NAD-dependent DNA ligase family. LigA subfamily. The cofactor is Mg(2+). Requires Mn(2+) as cofactor.

It carries out the reaction NAD(+) + (deoxyribonucleotide)n-3'-hydroxyl + 5'-phospho-(deoxyribonucleotide)m = (deoxyribonucleotide)n+m + AMP + beta-nicotinamide D-nucleotide.. In terms of biological role, DNA ligase that catalyzes the formation of phosphodiester linkages between 5'-phosphoryl and 3'-hydroxyl groups in double-stranded DNA using NAD as a coenzyme and as the energy source for the reaction. It is essential for DNA replication and repair of damaged DNA. The protein is DNA ligase of Salinibacter ruber (strain DSM 13855 / M31).